Here is an 89-residue protein sequence, read N- to C-terminus: Small ribosomal subunit protein uS17 (89 aa).

The protein belongs to the universal ribosomal protein uS17 family. Part of the 30S ribosomal subunit.

One of the primary rRNA binding proteins, it binds specifically to the 5'-end of 16S ribosomal RNA. This chain is Small ribosomal subunit protein uS17, found in Coxiella burnetii (strain RSA 331 / Henzerling II).